The chain runs to 122 residues: Large ribosomal subunit protein uL14 (122 aa).

The protein belongs to the universal ribosomal protein uL14 family. In terms of assembly, part of the 50S ribosomal subunit. Forms a cluster with proteins L3 and L19. In the 70S ribosome, L14 and L19 interact and together make contacts with the 16S rRNA in bridges B5 and B8.

Functionally, binds to 23S rRNA. Forms part of two intersubunit bridges in the 70S ribosome. The sequence is that of Large ribosomal subunit protein uL14 from Afipia carboxidovorans (strain ATCC 49405 / DSM 1227 / KCTC 32145 / OM5) (Oligotropha carboxidovorans).